The chain runs to 293 residues: Diaminopimelate epimerase (293 aa).

N13, Q46, and N66 together coordinate substrate. The Proton donor role is filled by C75. Residues G76–N77, N162, N195, and E213–R214 contribute to the substrate site. C222 serves as the catalytic Proton acceptor. Position 223–224 (G223–T224) interacts with substrate.

This sequence belongs to the diaminopimelate epimerase family. In terms of assembly, homodimer.

The protein resides in the cytoplasm. The catalysed reaction is (2S,6S)-2,6-diaminopimelate = meso-2,6-diaminopimelate. It participates in amino-acid biosynthesis; L-lysine biosynthesis via DAP pathway; DL-2,6-diaminopimelate from LL-2,6-diaminopimelate: step 1/1. Catalyzes the stereoinversion of LL-2,6-diaminopimelate (L,L-DAP) to meso-diaminopimelate (meso-DAP), a precursor of L-lysine and an essential component of the bacterial peptidoglycan. The polypeptide is Diaminopimelate epimerase (Psychrobacter sp. (strain PRwf-1)).